Consider the following 371-residue polypeptide: Beta sliding clamp (371 aa).

This sequence belongs to the beta sliding clamp family. Forms a ring-shaped head-to-tail homodimer around DNA which binds and tethers DNA polymerases and other proteins to the DNA. The DNA replisome complex has a single clamp-loading complex (3 tau and 1 each of delta, delta', psi and chi subunits) which binds 3 Pol III cores (1 core on the leading strand and 2 on the lagging strand) each with a beta sliding clamp dimer. Additional proteins in the replisome are other copies of gamma, psi and chi, Ssb, DNA helicase and RNA primase.

It is found in the cytoplasm. In terms of biological role, confers DNA tethering and processivity to DNA polymerases and other proteins. Acts as a clamp, forming a ring around DNA (a reaction catalyzed by the clamp-loading complex) which diffuses in an ATP-independent manner freely and bidirectionally along dsDNA. Initially characterized for its ability to contact the catalytic subunit of DNA polymerase III (Pol III), a complex, multichain enzyme responsible for most of the replicative synthesis in bacteria; Pol III exhibits 3'-5' exonuclease proofreading activity. The beta chain is required for initiation of replication as well as for processivity of DNA replication. The sequence is that of Beta sliding clamp (dnaN) from Treponema pallidum (strain Nichols).